The sequence spans 140 residues: Nucleoside diphosphate kinase (140 aa).

6 residues coordinate ATP: Lys11, Phe59, Arg87, Thr93, Arg104, and Asn114. The active-site Pros-phosphohistidine intermediate is the His117.

Belongs to the NDK family. In terms of assembly, homotetramer. Mg(2+) is required as a cofactor.

The protein resides in the cytoplasm. It carries out the reaction a 2'-deoxyribonucleoside 5'-diphosphate + ATP = a 2'-deoxyribonucleoside 5'-triphosphate + ADP. It catalyses the reaction a ribonucleoside 5'-diphosphate + ATP = a ribonucleoside 5'-triphosphate + ADP. Its function is as follows. Major role in the synthesis of nucleoside triphosphates other than ATP. The ATP gamma phosphate is transferred to the NDP beta phosphate via a ping-pong mechanism, using a phosphorylated active-site intermediate. This is Nucleoside diphosphate kinase from Methylobacterium nodulans (strain LMG 21967 / CNCM I-2342 / ORS 2060).